A 1322-amino-acid chain; its full sequence is Phosphoribosylformylglycinamidine synthase (1322 aa).

ATP-binding positions include 300–311 (GASTGAGGEIRD) and alanine 702. 4 residues coordinate Mg(2+): aspartate 703, glutamate 742, asparagine 746, and aspartate 915. Serine 917 contacts ATP. The Glutamine amidotransferase type-1 domain occupies 1073 to 1322 (VAILREQGIN…LFRNARAWVG (250 aa)). Cysteine 1166 (nucleophile) is an active-site residue. Active-site residues include histidine 1287 and glutamate 1289.

In the N-terminal section; belongs to the FGAMS family. As to quaternary structure, monomer.

The protein resides in the cytoplasm. The catalysed reaction is N(2)-formyl-N(1)-(5-phospho-beta-D-ribosyl)glycinamide + L-glutamine + ATP + H2O = 2-formamido-N(1)-(5-O-phospho-beta-D-ribosyl)acetamidine + L-glutamate + ADP + phosphate + H(+). The protein operates within purine metabolism; IMP biosynthesis via de novo pathway; 5-amino-1-(5-phospho-D-ribosyl)imidazole from N(2)-formyl-N(1)-(5-phospho-D-ribosyl)glycinamide: step 1/2. Phosphoribosylformylglycinamidine synthase involved in the purines biosynthetic pathway. Catalyzes the ATP-dependent conversion of formylglycinamide ribonucleotide (FGAR) and glutamine to yield formylglycinamidine ribonucleotide (FGAM) and glutamate. In Xylella fastidiosa (strain Temecula1 / ATCC 700964), this protein is Phosphoribosylformylglycinamidine synthase.